The following is a 186-amino-acid chain: dCTP deaminase (186 aa).

107–112 (KSSYAR) is a dCTP binding site. The active-site Proton donor/acceptor is the Glu-133. Residues Gln-152, Tyr-166, and Gln-176 each coordinate dCTP.

This sequence belongs to the dCTP deaminase family. Homotrimer.

It carries out the reaction dCTP + H2O + H(+) = dUTP + NH4(+). It functions in the pathway pyrimidine metabolism; dUMP biosynthesis; dUMP from dCTP (dUTP route): step 1/2. Catalyzes the deamination of dCTP to dUTP. In Chloroflexus aurantiacus (strain ATCC 29366 / DSM 635 / J-10-fl), this protein is dCTP deaminase.